We begin with the raw amino-acid sequence, 88 residues long: RQC P-site tRNA stabilizing factor (88 aa).

The region spanning 1 to 67 (MRLDKFLKVS…VEITNVKETV (67 aa)) is the S4 RNA-binding domain.

Belongs to the RqcP family. Associates with stalled 50S ribosomal subunits. Binds to RqcH, 23S rRNA and the P-site tRNA. Does not require RqcH for association with 50S subunits.

Its function is as follows. Key component of the ribosome quality control system (RQC), a ribosome-associated complex that mediates the extraction of incompletely synthesized nascent chains from stalled ribosomes and their subsequent degradation. RqcH recruits Ala-charged tRNA, and with RqcP directs the elongation of stalled nascent chains on 50S ribosomal subunits, leading to non-templated C-terminal alanine extensions (Ala tail). The Ala tail promotes nascent chain degradation. RqcP is associated with the translocation-like movement of the peptidyl-tRNA from the A-site into the P-site. This is RQC P-site tRNA stabilizing factor from Halalkalibacterium halodurans (strain ATCC BAA-125 / DSM 18197 / FERM 7344 / JCM 9153 / C-125) (Bacillus halodurans).